A 151-amino-acid chain; its full sequence is Deoxyuridine 5'-triphosphate nucleotidohydrolase (151 aa).

Residues 70–72 (RSG), N83, 87–89 (LID), and M97 each bind substrate.

This sequence belongs to the dUTPase family. The cofactor is Mg(2+).

It carries out the reaction dUTP + H2O = dUMP + diphosphate + H(+). Its pathway is pyrimidine metabolism; dUMP biosynthesis; dUMP from dCTP (dUTP route): step 2/2. Functionally, this enzyme is involved in nucleotide metabolism: it produces dUMP, the immediate precursor of thymidine nucleotides and it decreases the intracellular concentration of dUTP so that uracil cannot be incorporated into DNA. This chain is Deoxyuridine 5'-triphosphate nucleotidohydrolase, found in Pseudomonas putida (strain ATCC 700007 / DSM 6899 / JCM 31910 / BCRC 17059 / LMG 24140 / F1).